The sequence spans 81 residues: Cytotoxin 2b (81 aa).

The signal sequence occupies residues methionine 1–threonine 21. 4 cysteine pairs are disulfide-bonded: cysteine 24–cysteine 42, cysteine 35–cysteine 59, cysteine 63–cysteine 74, and cysteine 75–cysteine 80.

The protein belongs to the three-finger toxin family. Short-chain subfamily. Type IA cytotoxin sub-subfamily. Monomer in solution; Homodimer and oligomer in the presence of negatively charged lipids forming a pore with a size ranging between 20 and 30 Angstroms. Expressed by the venom gland.

It is found in the secreted. It localises to the target cell membrane. Its function is as follows. Shows cytolytic activity on many different cells by forming pore in lipid membranes. In vivo, increases heart rate or kills the animal by cardiac arrest. In addition, it binds to heparin with high affinity, interacts with Kv channel-interacting protein 1 (KCNIP1) in a calcium-independent manner, and binds to integrin alpha-V/beta-3 (ITGAV/ITGB3) with moderate affinity. The protein is Cytotoxin 2b of Naja sputatrix (Malayan spitting cobra).